An 841-amino-acid chain; its full sequence is Axin-1 (841 aa).

The segment at 1-78 (MNIQGKGFPL…GYEPEGSASP (78 aa)) is disordered. The span at 44–61 (FYSSKSDAVRNETSTATP) shows a compositional bias: polar residues. The RGS domain maps to 88-211 (SLHSLLDDQD…LKSDIYLEYT (124 aa)). The segment at 217–269 (SPKIYSDPSSGSGTGKGLPGYLPTLNEDEEWKCDQDTEPEASRDSAPSSRLTQ) is disordered. The span at 248 to 259 (KCDQDTEPEASR) shows a compositional bias: basic and acidic residues. The segment at 348–433 (LRKQHRREMQ…DADISSGPSV (86 aa)) is interaction with GSK3B. The tract at residues 434–508 (ISHKMPSAQP…RSPESGHLGK (75 aa)) is interaction with beta-catenin. 3 disordered regions span residues 482–527 (KTPG…TTKS), 613–635 (NIKKTDSGKSDGANYEMPGSPED), and 727–756 (RRLEEEEKRAGKLPLKQRLKPQKRPGSGAS). The span at 727-736 (RRLEEEEKRA) shows a compositional bias: basic and acidic residues. Residues 759-841 (CENIVVAYYF…KIIGKVEKID (83 aa)) enclose the DIX domain.

In terms of assembly, homodimer. Post-translationally, ADP-ribosylated by tankyrase TNKS and TNKS2. Poly-ADP-ribosylated protein is recognized by RNF146, followed by ubiquitination at 'Lys-48' and subsequent activation of the Wnt signaling pathway. Ubiquitinated by RNF146 when poly-ADP-ribosylated, leading to its degradation and subsequent activation of the Wnt signaling pathway.

The protein localises to the cytoplasm. Its subcellular location is the nucleus. It is found in the membrane. The protein resides in the cell membrane. In terms of biological role, component of the beta-catenin destruction complex required for regulating CTNNB1 levels through phosphorylation and ubiquitination, and modulating Wnt-signaling. Controls dorsoventral patterning via two opposing effects; down-regulates CTNNB1 to inhibit the Wnt signaling pathway and ventralize embryos, but also dorsalizes embryos by activating a Wnt-independent JNK signaling pathway. This chain is Axin-1 (AXIN1), found in Gallus gallus (Chicken).